The primary structure comprises 274 residues: ATP synthase subunit a (274 aa).

5 helical membrane passes run 40–60, 110–130, 149–169, 224–244, and 245–265; these read FWVC…VILI, IFVW…LVPF, DVNI…FYSI, IFIL…SVPW, and AIFH…LTIV.

This sequence belongs to the ATPase A chain family. In terms of assembly, F-type ATPases have 2 components, CF(1) - the catalytic core - and CF(0) - the membrane proton channel. CF(1) has five subunits: alpha(3), beta(3), gamma(1), delta(1), epsilon(1). CF(0) has three main subunits: a(1), b(2) and c(9-12). The alpha and beta chains form an alternating ring which encloses part of the gamma chain. CF(1) is attached to CF(0) by a central stalk formed by the gamma and epsilon chains, while a peripheral stalk is formed by the delta and b chains.

It is found in the cell membrane. Functionally, key component of the proton channel; it plays a direct role in the translocation of protons across the membrane. This is ATP synthase subunit a from Buchnera aphidicola subsp. Baizongia pistaciae (strain Bp).